The sequence spans 192 residues: Fe/S biogenesis protein NfuA (192 aa).

[4Fe-4S] cluster contacts are provided by Cys149 and Cys152.

The protein belongs to the NfuA family. In terms of assembly, homodimer. The cofactor is [4Fe-4S] cluster.

Functionally, involved in iron-sulfur cluster biogenesis. Binds a 4Fe-4S cluster, can transfer this cluster to apoproteins, and thereby intervenes in the maturation of Fe/S proteins. Could also act as a scaffold/chaperone for damaged Fe/S proteins. In Tolumonas auensis (strain DSM 9187 / NBRC 110442 / TA 4), this protein is Fe/S biogenesis protein NfuA.